The following is a 51-amino-acid chain: Large ribosomal subunit protein eL39 (51 aa).

Belongs to the eukaryotic ribosomal protein eL39 family.

The polypeptide is Large ribosomal subunit protein eL39 (Hyperthermus butylicus (strain DSM 5456 / JCM 9403 / PLM1-5)).